The following is a 2524-amino-acid chain: Neurogenic locus notch homolog protein 1 (2524 aa).

The first 19 residues, 1–19 (MDRIGLAVLLCSLPVLTQG), serve as a signal peptide directing secretion. EGF-like domains lie at 20-57 (LRCT…ERCQ), 58-99 (FPNP…KVCL), 102-140 (VDNA…DSCQ), and 141-177 (QADP…ATCK). The Extracellular segment spans residues 20–1729 (LRCTQTAEMC…METPKPSTLY (1710 aa)). 33 cysteine pairs are disulfide-bonded: Cys22–Cys35, Cys29–Cys45, Cys47–Cys56, Cys62–Cys74, Cys68–Cys87, Cys89–Cys98, Cys106–Cys117, Cys111–Cys128, Cys130–Cys139, Cys145–Cys156, Cys150–Cys165, Cys167–Cys176, Cys183–Cys194, Cys188–Cys203, Cys205–Cys214, Cys221–Cys232, Cys226–Cys242, Cys244–Cys253, Cys260–Cys271, Cys265–Cys280, Cys282–Cys291, Cys298–Cys311, Cys305–Cys320, Cys322–Cys331, Cys338–Cys349, Cys343–Cys358, Cys360–Cys369, Cys375–Cys386, Cys380–Cys397, Cys399–Cys408, Cys415–Cys428, Cys422–Cys437, and Cys439–Cys448. Residues 179 to 215 (DINECSQNPCKNGGQCINEFGSYRCTCQNRFTGRNCD) form the EGF-like 5; calcium-binding domain. An EGF-like 6 domain is found at 217–254 (PYVPCNPSPCLNGGTCRQTDDTSYDCTCLPGFSGQNCE). Thr231 is a glycosylation site (O-linked (Fuc...) threonine; alternate). Residue Thr231 is glycosylated (O-linked (GalNAc...) threonine; alternate). In terms of domain architecture, EGF-like 7; calcium-binding spans 256–292 (NIDDCPSNNCRNGGTCVDGVNTYNCQCPPDWTGQYCT). An EGF-like 8; calcium-binding domain is found at 294–332 (DVDECQLMPNACQNGGTCHNTYGGYNCVCVNGWTGEDCS). The 37-residue stretch at 334 to 370 (NIDDCANAACHSGATCHDRVASFYCECPHGRTGLLCH) folds into the EGF-like 9; calcium-binding domain. The 39-residue stretch at 371-409 (LDNACISNPCNEGSNCDTNPVNGKAICTCPPGYTGPACN) folds into the EGF-like 10 domain. The EGF-like 11; calcium-binding domain occupies 411-449 (DVDECSLGANPCEHGGRCTNTLGSFQCNCPQGYAGPRCE). Residues Thr431 and Ser434 each contribute to the Ca(2+) site. Ser434 carries O-linked (Glc...) serine glycosylation. Asp451, Val452, and Glu454 together coordinate Ca(2+). The 37-residue stretch at 451 to 487 (DVNECLSNPCQNDSTCLDQIGEFQCICMPGYEGLYCE) folds into the EGF-like 12; calcium-binding domain. 3 disulfide bridges follow: Cys455–Cys466, Cys460–Cys475, and Cys477–Cys486. O-linked (Glc...) serine glycosylation is present at Ser457. Asn462 carries N-linked (GlcNAc...) asparagine glycosylation. A glycan (O-linked (Fuc...) threonine) is linked at Thr465. Positions 468 and 469 each coordinate Ca(2+). Ca(2+)-binding residues include Asn489, Ile490, and Glu492. Residues 489–525 (NIDECASNPCLHNGKCIDKINEFRCDCPTGFSGNLCQ) enclose the EGF-like 13; calcium-binding domain. 75 cysteine pairs are disulfide-bonded: Cys493–Cys504, Cys498–Cys513, Cys515–Cys524, Cys531–Cys542, Cys536–Cys551, Cys553–Cys562, Cys569–Cys579, Cys574–Cys588, Cys590–Cys599, Cys606–Cys617, Cys611–Cys626, Cys628–Cys637, Cys644–Cys654, Cys649–Cys663, Cys665–Cys674, Cys681–Cys692, Cys686–Cys701, Cys703–Cys712, Cys719–Cys729, Cys724–Cys738, Cys740–Cys749, Cys756–Cys767, Cys761–Cys776, Cys778–Cys787, Cys794–Cys805, Cys799–Cys814, Cys816–Cys825, Cys832–Cys843, Cys837–Cys854, Cys856–Cys865, Cys872–Cys883, Cys877–Cys892, Cys894–Cys903, Cys910–Cys921, Cys915–Cys930, Cys932–Cys941, Cys948–Cys959, Cys953–Cys968, Cys970–Cys979, Cys986–Cys997, Cys991–Cys1006, Cys1008–Cys1017, Cys1024–Cys1035, Cys1029–Cys1044, Cys1046–Cys1055, Cys1062–Cys1073, Cys1067–Cys1082, Cys1084–Cys1093, Cys1100–Cys1121, Cys1115–Cys1130, Cys1132–Cys1141, Cys1148–Cys1159, Cys1153–Cys1168, Cys1170–Cys1179, Cys1186–Cys1197, Cys1191–Cys1206, Cys1208–Cys1217, Cys1224–Cys1243, Cys1237–Cys1252, Cys1254–Cys1263, Cys1270–Cys1283, Cys1275–Cys1292, Cys1294–Cys1303, Cys1310–Cys1321, Cys1315–Cys1333, Cys1335–Cys1344, Cys1351–Cys1362, Cys1356–Cys1371, Cys1373–Cys1382, Cys1390–Cys1401, Cys1395–Cys1412, Cys1414–Cys1423, Cys1447–Cys1470, Cys1452–Cys1465, and Cys1461–Cys1477. An O-linked (Glc...) serine glycan is attached at Ser495. Residues Asp506 and Lys507 each contribute to the Ca(2+) site. Positions 527 to 563 (DFDECTSTPCKNGAKCLDGPNSYTCQCTEGFTGRHCE) constitute an EGF-like 14; calcium-binding domain. The EGF-like 15; calcium-binding domain maps to 565–600 (DINECIPDPCHYGTCKDGIATFTCLCRPGYTGRLCD). Residues 602–638 (DINECLSKPCLNGGQCTDRENGYICTCPKGTTGVNCE) form the EGF-like 16; calcium-binding domain. An EGF-like 17 domain is found at 640 to 675 (KIDDCASNLCDNGKCIDKIDGYECTCEPGYTGKLCN). The region spanning 677-713 (NINECDSNPCRNGGTCKDQINGFTCVCPDGYHDHMCL) is the EGF-like 18; calcium-binding domain. Residues 715 to 750 (EVNECNSNPCIHGACHDGVNGYKCDCEAGWSGSNCD) enclose the EGF-like 19; calcium-binding domain. Positions 752–788 (NNNECESNPCMNGGTCKDMTGAYICTCKAGFSGPNCQ) constitute an EGF-like 20; calcium-binding domain. Residues 790 to 826 (NINECSSNPCLNHGTCIDDVAGYKCNCMLPYTGAICE) enclose the EGF-like 21; calcium-binding domain. The 39-residue stretch at 828–866 (VLAPCAGSPCKNGGRCKESEDFETFSCECPPGWQGQTCE) folds into the EGF-like 22 domain. The EGF-like 23; calcium-binding domain occupies 868-904 (DMNECVNRPCRNGATCQNTNGSYKCNCKPGYTGRNCE). N-linked (GlcNAc...) asparagine glycosylation is present at Asn887. Residues 906-942 (DIDDCQPNPCHNGGSCSDGINMFFCNCPAGFRGPKCE) form the EGF-like 24; calcium-binding domain. Residues 944–980 (DINECASNPCKNGANCTDCVNSYTCTCQPGFSGIHCE) enclose the EGF-like 25; calcium-binding domain. Residue Asn958 is glycosylated (N-linked (GlcNAc...) asparagine). An EGF-like 26 domain is found at 982-1018 (NTPDCTESSCFNGGTCIDGINTFTCQCPPGFTGSYCQ). Positions 1020–1056 (DINECDSKPCLNGGTCQDSYGTYKCTCPQGYTGLNCQ) constitute an EGF-like 27; calcium-binding domain. EGF-like domains are found at residues 1058 to 1094 (LVRW…VYCD) and 1096 to 1142 (PSVS…SYCE). Residues 1144–1180 (QVDECSPNPCQNGATCTDYLGGYSCECVAGYHGVNCS) enclose the EGF-like 30; calcium-binding domain. A glycan (N-linked (GlcNAc...) asparagine) is linked at Asn1178. The EGF-like 31; calcium-binding domain occupies 1182-1218 (EINECLSHPCQNGGTCIDLINTYKCSCPRGTQGVHCE). The EGF-like 32; calcium-binding domain maps to 1220-1264 (NVDDCTPFYDSFTLEPKCFNNGKCIDRVGGYNCICPPGFVGERCE). EGF-like domains lie at 1266–1304 (DVNE…RRCE), 1306–1346 (VVDG…TCEY), 1347–1383 (DSRT…ATCQ), and 1386–1424 (VISP…LFCH). Residue Thr1400 is glycosylated (O-linked (Fuc...) threonine; alternate). Thr1400 is a glycosylation site (O-linked (GalNAc...) threonine; alternate). 3 LNR repeats span residues 1447-1487 (CENE…PWKN), 1488-1529 (CTQS…CNPL), and 1530-1564 (YDQY…NMPE). The N-linked (GlcNAc...) asparagine glycan is linked to Asn1487. 5 disulfide bridges follow: Cys1488/Cys1512, Cys1494/Cys1507, Cys1503/Cys1519, Cys1534/Cys1547, and Cys1543/Cys1559. A glycan (N-linked (GlcNAc...) asparagine) is linked at Asn1508. N-linked (GlcNAc...) asparagine glycosylation occurs at Asn1584. Residues 1730-1750 (PMLSMLVIPLLIIFVFMMVIV) form a helical membrane-spanning segment. Residues 1751–2524 (NKKRRREHGQ…QRTHIPEAFK (774 aa)) are Cytoplasmic-facing. ANK repeat units follow at residues 1876 to 1919 (DGFT…QLHN), 1924 to 1953 (TGET…DANV), 1957 to 1987 (MGRT…DLDA), 1991 to 2020 (DGTT…DVNA), 2024 to 2053 (FGKS…NKDM), and 2057 to 2086 (KEET…NRDI). Disordered regions lie at residues 2144 to 2230 (NMKP…LNHL), 2369 to 2407 (MQAQ…FCSS), and 2451 to 2524 (LTPP…EAFK). Composition is skewed to polar residues over residues 2180–2192 (GKTT…SSGV) and 2208–2230 (DVSS…LNHL). A compositionally biased stretch (low complexity) spans 2369–2394 (MQAQQMQQQQNLQLHQSMQQQHHNSS). Polar residues-rich tracts occupy residues 2395–2407 (TTST…FCSS) and 2451–2471 (LTPP…SHQL). Residues 2481-2496 (PSPESPDQWSSSSPHS) are compositionally biased toward low complexity. Residues 2497–2516 (NMSDWSEGISSPPTSMQPQR) are compositionally biased toward polar residues.

This sequence belongs to the NOTCH family. As to quaternary structure, forms a ternary complex with nrarp and rbpj/suh. In terms of processing, O-glycosylated on the EGF-like domains. Contains both O-linked fucose and O-linked glucose. O-linked glycosylation by galnt11 is involved in determination of left/right symmetry: glycosylation promotes activation of notch1, possibly by promoting cleavage by adam17, modulating the balance between motile and immotile (sensory) cilia at the left-right organiser (LRO). Post-translationally, synthesized in the endoplasmic reticulum as an inactive form which is proteolytically cleaved by a furin-like convertase in the trans-Golgi network before it reaches the plasma membrane to yield an active, ligand-accessible form. Cleavage results in a C-terminal fragment N(TM) and a N-terminal fragment N(EC). Following ligand binding, it is cleaved by adam17 to yield a membrane-associated intermediate fragment called notch extracellular truncation (NEXT). Following endocytosis, this fragment is then cleaved by presenilin dependent gamma-secretase to release a Notch-derived peptide containing the intracellular domain (NICD) from the membrane.

It localises to the cell membrane. The protein resides in the nucleus. Functionally, functions as a receptor for membrane-bound ligands Jagged-1 (JAG1), Jagged-2 (JAG2) and Delta-1 (DLL1) to regulate cell-fate determination. Upon ligand activation through the released notch intracellular domain (NICD) it forms a transcriptional activator complex with RBPJ/RBPSUH and activates genes of the enhancer of split locus. Affects the implementation of differentiation, proliferation and apoptotic programs. Involved in angiogenesis; negatively regulates endothelial cell proliferation and migration and angiogenic sprouting. Involved in the maturation of both CD4(+) and CD8(+) cells in the thymus. Important for follicular differentiation and possibly cell fate selection within the follicle. During cerebellar development, functions as a receptor for neuronal DNER and is involved in the differentiation of Bergmann glia. Represses neuronal and myogenic differentiation. May play an essential role in postimplantation development, probably in some aspect of cell specification and/or differentiation. May be involved in mesoderm development, somite formation and neurogenesis. Involved in determination of left/right symmetry by modulating the balance between motile and immotile (sensory) cilia at the left-right organiser (LRO). The polypeptide is Neurogenic locus notch homolog protein 1 (notch1) (Xenopus laevis (African clawed frog)).